Consider the following 55-residue polypeptide: U17-myrmicitoxin-Mri1b (55 aa).

Residues M1–S31 form the signal peptide. Q32 is subject to Pyrrolidone carboxylic acid.

Contains 1 disulfide bond. Expressed by the venom gland.

It localises to the secreted. This Manica rubida (European giant red ant) protein is U17-myrmicitoxin-Mri1b.